The sequence spans 639 residues: Coiled-coil domain-containing protein 27 (639 aa).

The segment at 154–176 (YPRKRSEPSDPSPTGSPTVVKKS) is disordered. Positions 203–242 (QRFSEMESQMQKKDQEILTLQKEKEALKKQLKNLLRGKGT) form a coiled coil. The disordered stretch occupies residues 291 to 385 (ESSKELHVEP…EECHPKRSYS (95 aa)). A compositionally biased stretch (basic and acidic residues) spans 292–309 (SSKELHVEPGSAIEEKSS). Positions 310 to 320 (EGPPEEAAAAK) are enriched in low complexity. Acidic residues-rich tracts occupy residues 336 to 350 (GPEE…EVEG) and 358 to 369 (EGEILVNEEEAS). A compositionally biased stretch (basic and acidic residues) spans 370–380 (WELREDEECHP).

The chain is Coiled-coil domain-containing protein 27 (Ccdc27) from Mus musculus (Mouse).